Here is a 91-residue protein sequence, read N- to C-terminus: MVATNRCCVFALLFALLLVHSLTEAGKGKEVLGKIKDKLIEAKDKIKSGWERLTSQSEYACPAIEKFCEDHCAAKKAVGKCDDFKCNCIKL.

The first 25 residues, 1 to 25 (MVATNRCCVFALLFALLLVHSLTEA), serve as a signal peptide directing secretion. Residues 26–44 (GKGKEVLGKIKDKLIEAKD) constitute a propeptide that is removed on maturation. The BetaSPN-type CS-alpha/beta domain maps to 58–91 (EYACPAIEKFCEDHCAAKKAVGKCDDFKCNCIKL). 3 cysteine pairs are disulfide-bonded: C61–C81, C68–C86, and C72–C88.

Belongs to the long chain scorpion toxin family. Class 2 subfamily. Expressed by the venom gland.

The protein localises to the secreted. Its function is as follows. The full peptide presents antibacterial and cytotoxic activities. The synthetic C-terminus (AA 33-76) inhibits voltage-gated potassium channels Kv1.1/KCNA1, Kv1.2/KCNA2, and Kv1.3/KCNA3. This chain is Potassium channel toxin TtrKIK, found in Tityus trivittatus (Argentinean scorpion).